A 416-amino-acid chain; its full sequence is PDZ and LIM domain protein 7 (416 aa).

A PDZ domain is found at 1 to 85 (MESYKVMLNG…RLCLTLSRAQ (85 aa)). 2 disordered regions span residues 145–191 (CTPQ…AVDP) and 202–221 (TSTV…MQNR). Residues 168–181 (PGLAPRTPAATPGP) are compositionally biased toward low complexity. 3 consecutive LIM zinc-binding domains span residues 239–297 (PLCY…TRYA), 298–357 (PSCA…MFGT), and 358–416 (KCRG…FSHV).

Interacts with various PKC isoforms through the LIM zinc-binding domains. Interacts with TPM2. Interacts with TBX4 and TBX5.

It localises to the cytoplasm. Its subcellular location is the cytoskeleton. The protein localises to the myofibril. It is found in the sarcomere. The protein resides in the z line. In terms of biological role, may function as a scaffold on which the coordinated assembly of proteins can occur. May play a role as an adapter that, via its PDZ domain, localizes LIM-binding proteins to actin filaments of both skeletal muscle and nonmuscle tissues. May be involved in bone formation. This Gallus gallus (Chicken) protein is PDZ and LIM domain protein 7 (PDLIM7).